The chain runs to 132 residues: Small ribosomal subunit protein uS8 (132 aa).

The protein belongs to the universal ribosomal protein uS8 family. In terms of assembly, part of the 30S ribosomal subunit. Contacts proteins S5 and S12.

Functionally, one of the primary rRNA binding proteins, it binds directly to 16S rRNA central domain where it helps coordinate assembly of the platform of the 30S subunit. The chain is Small ribosomal subunit protein uS8 from Rickettsia felis (strain ATCC VR-1525 / URRWXCal2) (Rickettsia azadi).